Reading from the N-terminus, the 223-residue chain is Protein-disulfide oxidoreductase DsbI (223 aa).

The chain crosses the membrane as a helical span at residues 26 to 46; it reads LLWLLMAVAMGALIILAHSFF. Cysteines 55 and 58 form a disulfide. Transmembrane regions (helical) follow at residues 59 to 78 and 82 to 102; these read VYIR…AAIN and IILK…GLKF. Cysteine 127 and cysteine 153 form a disulfide bridge. A helical transmembrane segment spans residues 198-218; it reads CMLAFGMCLVLLVIMSGAWAL.

The protein belongs to the DsbB family. DsbI subfamily. As to quaternary structure, interacts with DsbL.

The protein localises to the cell inner membrane. Functionally, required for disulfide bond formation in some proteins. Part of a redox system composed of DsbI and DsbL that mediates formation of an essential disulfide bond in AssT. This is Protein-disulfide oxidoreductase DsbI from Escherichia coli O1:K1 / APEC.